The primary structure comprises 249 residues: tRNA (guanine-N(1)-)-methyltransferase (249 aa).

S-adenosyl-L-methionine contacts are provided by residues Gly-113 and 132 to 137; that span reads VGDFVV.

It belongs to the RNA methyltransferase TrmD family. As to quaternary structure, homodimer.

The protein localises to the cytoplasm. The catalysed reaction is guanosine(37) in tRNA + S-adenosyl-L-methionine = N(1)-methylguanosine(37) in tRNA + S-adenosyl-L-homocysteine + H(+). Functionally, specifically methylates guanosine-37 in various tRNAs. The protein is tRNA (guanine-N(1)-)-methyltransferase of Desulforudis audaxviator (strain MP104C).